The sequence spans 393 residues: Probable acetyl-CoA acyltransferase (393 aa).

Cysteine 88 acts as the Acyl-thioester intermediate in catalysis. Catalysis depends on proton acceptor residues histidine 349 and cysteine 378.

It belongs to the thiolase-like superfamily. Thiolase family.

It is found in the cytoplasm. It carries out the reaction 2 acetyl-CoA = acetoacetyl-CoA + CoA. This Staphylococcus aureus (strain bovine RF122 / ET3-1) protein is Probable acetyl-CoA acyltransferase.